Consider the following 552-residue polypeptide: Cleavage and polyadenylation specificity factor subunit 6 (552 aa).

Residues Met1–Gly213 form a necessary for interaction with NXF1 region. The 81-residue stretch at Ile81–Lys161 folds into the RRM domain. Residues Ile81–Lys161 form a necessary for interaction with NUDT21/CPSF5 region. Residues Ile81–Lys161 form a necessary for nuclear paraspeckles localization region. Phosphothreonine is present on Thr157. Over residues Met169–Met180 the composition is skewed to polar residues. Disordered regions lie at residues Met169–Glu411 and Gly479–Arg552. The short motif at Arg202–Arg206 is the GAR element. Residues Phe207–Gly219 show a composition bias toward low complexity. Pro residues-rich tracts occupy residues Pro220–Gly265, Gly285–Thr366, and Gly377–Pro388. Over residues Pro389 to Thr404 the composition is skewed to basic and acidic residues. Residues Thr404 and Thr407 each carry the phosphothreonine modification. A sufficient for nuclear speckle localization region spans residues Thr404–Arg552. The segment at Ala405–Arg552 is necessary for RNA-binding. A necessary for interaction with SRSF3, SRSF7 and TRA2B/SFRS10 region spans residues Glu481–Arg552. The tract at residues Arg491–Arg552 is arg/Ser-rich domain. A compositionally biased stretch (basic and acidic residues) spans Arg494–Arg504. Phosphoserine is present on residues Ser495, Ser501, Ser512, Ser514, and Ser526. Basic residues predominate over residues Glu505–Arg515. The tract at residues Lys511–Arg552 is sufficient for nuclear targeting. Residues Asp516–Arg552 show a composition bias toward basic and acidic residues.

This sequence belongs to the RRM CPSF6/7 family. As to quaternary structure, component of the cleavage factor Im (CFIm) complex which is a heterotetramer composed of two subunits of NUDT21/CPSF5 and two subunits of CPSF6 or CPSF7 or a heterodimer of CPSF6 and CPSF7. The cleavage factor Im (CFIm) complex associates with the CPSF and CSTF complexes to promote the assembly of the core mRNA 3'-processing machinery. Associates with the exon junction complex (EJC). Associates with the 80S ribosome particle. Interacts (via the RRM domain) with NUDT21/CPSF5; this interaction is direct and enhances binding to RNA. Interacts (via Arg/Ser-rich domain) with FIP1L1 (preferentially via unphosphorylated form and Arg/Glu/Asp-rich domain); this interaction mediates, at least in part, the interaction between the CFIm and CPSF complexes and may be inhibited by CPSF6 hyper-phosphorylation. Interacts (via N-terminus) with NXF1; this interaction is direct. Interacts with SRSF3. Interacts with SRSF7. Interacts with SNRNP70. Interacts with TRA2B/SFRS10. Interacts with UPF1. Interacts with UPF3B. Interacts with VIRMA. Interacts (via Arg/Ser-rich domain) with TNPO3; promoting nuclear import of CPSF6 independently of its phosphorylation status. Interacts with YTHDC1. Post-translationally, phosphorylated. Phosphorylated in the Arg/Ser-rich domain by SRPK1, in vitro. Symmetrically dimethylated on arginine residues in the GAR motif by PRMT5 in a WDR77- and CLNS1A-dependent manner. Asymmetrically dimethylated on arginine residues in the GAR motif by PRMT1.

The protein resides in the nucleus. It is found in the nucleoplasm. It localises to the nucleus speckle. The protein localises to the cytoplasm. In terms of biological role, component of the cleavage factor Im (CFIm) complex that functions as an activator of the pre-mRNA 3'-end cleavage and polyadenylation processing required for the maturation of pre-mRNA into functional mRNAs. CFIm contributes to the recruitment of multiprotein complexes on specific sequences on the pre-mRNA 3'-end, so called cleavage and polyadenylation signals (pA signals). Most pre-mRNAs contain multiple pA signals, resulting in alternative cleavage and polyadenylation (APA) producing mRNAs with variable 3'-end formation. The CFIm complex acts as a key regulator of cleavage and polyadenylation site choice during APA through its binding to 5'-UGUA-3' elements localized in the 3'-untranslated region (UTR) for a huge number of pre-mRNAs. CPSF6 enhances NUDT21/CPSF5 binding to 5'-UGUA-3' elements localized upstream of pA signals and promotes RNA looping, and hence activates directly the mRNA 3'-processing machinery. Plays a role in mRNA export. The chain is Cleavage and polyadenylation specificity factor subunit 6 from Pongo abelii (Sumatran orangutan).